The chain runs to 234 residues: UPF0758 protein Rfer_3252 (234 aa).

The region spanning 112 to 234 (IFATPDAVKH…ALSMAERGLL (123 aa)) is the MPN domain. The Zn(2+) site is built by H183, H185, and D196. The JAMM motif signature appears at 183–196 (HNHPSGTVQPSRAD).

This sequence belongs to the UPF0758 family.

This is UPF0758 protein Rfer_3252 from Albidiferax ferrireducens (strain ATCC BAA-621 / DSM 15236 / T118) (Rhodoferax ferrireducens).